We begin with the raw amino-acid sequence, 255 residues long: MNFIVVIPARFASSRLPGKPLADIAGKPMIQWVYERAKLSDASKVIVATDNQQVFDTVKEFGGEVLMTSPKHESGTDRLQEVAQQLGLAKDEIIVNVQGDEPLIPPAVINQVAANIQGNSWASAATLSEPLVESEMVFDPNAVKVVSDVNGAALYFSRAPIPWYRDEYQQPVSQVAPRTDGLVQRHIGIYAYKVNLLNQFVQWPMSALEAVEKLEQLRILSNGKKIHIAPSCELVPGGVDTQADLDRVRAKLKSS.

Belongs to the KdsB family.

Its subcellular location is the cytoplasm. It carries out the reaction 3-deoxy-alpha-D-manno-oct-2-ulosonate + CTP = CMP-3-deoxy-beta-D-manno-octulosonate + diphosphate. Its pathway is nucleotide-sugar biosynthesis; CMP-3-deoxy-D-manno-octulosonate biosynthesis; CMP-3-deoxy-D-manno-octulosonate from 3-deoxy-D-manno-octulosonate and CTP: step 1/1. It functions in the pathway bacterial outer membrane biogenesis; lipopolysaccharide biosynthesis. Activates KDO (a required 8-carbon sugar) for incorporation into bacterial lipopolysaccharide in Gram-negative bacteria. This Saccharophagus degradans (strain 2-40 / ATCC 43961 / DSM 17024) protein is 3-deoxy-manno-octulosonate cytidylyltransferase.